The following is a 228-amino-acid chain: Ribonuclease H (228 aa).

The 141-residue stretch at 2–142 folds into the RNase H type-1 domain; sequence GPMRTIVYAD…ADRLATLGRR (141 aa). Mg(2+) is bound by residues aspartate 11, glutamate 49, aspartate 71, and aspartate 134.

This sequence belongs to the RNase H family. Monomer. Mg(2+) serves as cofactor.

It is found in the cytoplasm. The catalysed reaction is Endonucleolytic cleavage to 5'-phosphomonoester.. Functionally, endonuclease that specifically degrades the RNA of RNA-DNA hybrids. This is Ribonuclease H from Methylorubrum extorquens (strain PA1) (Methylobacterium extorquens).